The primary structure comprises 408 residues: uncharacterized protein (408 aa).

8 consecutive 4Fe-4S ferredoxin-type domains span residues 42 to 72, 78 to 107, 122 to 151, 151 to 181, 212 to 241, 233 to 265, 273 to 302, and 304 to 333; these read IPPI…MIYN, KLPV…MDKH, SNLI…RKEG, GKYV…VVDE, KIPH…NEKK, GEID…IYKP, ICYV…ISKE, and KLPY…VVKP. Cysteine 52, cysteine 55, cysteine 58, cysteine 62, cysteine 87, cysteine 90, cysteine 93, cysteine 97, cysteine 131, cysteine 134, cysteine 137, cysteine 141, cysteine 160, cysteine 163, cysteine 166, and cysteine 170 together coordinate [4Fe-4S] cluster. Residues cysteine 282, cysteine 285, cysteine 288, and cysteine 292 each coordinate [4Fe-4S] cluster.

This is an uncharacterized protein from Methanocaldococcus jannaschii (strain ATCC 43067 / DSM 2661 / JAL-1 / JCM 10045 / NBRC 100440) (Methanococcus jannaschii).